A 353-amino-acid chain; its full sequence is Photosystem II protein D1 (353 aa).

Thr2 carries the N-acetylthreonine modification. A Phosphothreonine modification is found at Thr2. 3 helical membrane passes run 29–46 (YIGW…TATS), 118–133 (HFLL…EWEL), and 142–156 (WIAV…AATA). Position 118 (His118) interacts with chlorophyll a. A pheophytin a-binding site is contributed by Tyr126. [CaMn4O5] cluster is bound by residues Asp170 and Glu189. The helical transmembrane segment at 197–218 (FHMLGVAGVFGGSLFSAMHGSL) threads the bilayer. His198 serves as a coordination point for chlorophyll a. A quinone is bound by residues His215 and 264 to 265 (SF). His215 serves as a coordination point for Fe cation. A Fe cation-binding site is contributed by His272. A helical membrane pass occupies residues 274 to 288 (FLAAWPVVGIWFTAL). 4 residues coordinate [CaMn4O5] cluster: His332, Glu333, Asp342, and Ala344. The propeptide occupies 345 to 353 (AVEAPSTNG).

It belongs to the reaction center PufL/M/PsbA/D family. As to quaternary structure, PSII is composed of 1 copy each of membrane proteins PsbA, PsbB, PsbC, PsbD, PsbE, PsbF, PsbH, PsbI, PsbJ, PsbK, PsbL, PsbM, PsbT, PsbX, PsbY, PsbZ, Psb30/Ycf12, at least 3 peripheral proteins of the oxygen-evolving complex and a large number of cofactors. It forms dimeric complexes. The D1/D2 heterodimer binds P680, chlorophylls that are the primary electron donor of PSII, and subsequent electron acceptors. It shares a non-heme iron and each subunit binds pheophytin, quinone, additional chlorophylls, carotenoids and lipids. D1 provides most of the ligands for the Mn4-Ca-O5 cluster of the oxygen-evolving complex (OEC). There is also a Cl(-1) ion associated with D1 and D2, which is required for oxygen evolution. The PSII complex binds additional chlorophylls, carotenoids and specific lipids. serves as cofactor. In terms of processing, tyr-161 forms a radical intermediate that is referred to as redox-active TyrZ, YZ or Y-Z. Post-translationally, C-terminally processed by CTPA; processing is essential to allow assembly of the oxygen-evolving complex and thus photosynthetic growth.

Its subcellular location is the plastid. It localises to the chloroplast thylakoid membrane. The enzyme catalyses 2 a plastoquinone + 4 hnu + 2 H2O = 2 a plastoquinol + O2. Its function is as follows. Photosystem II (PSII) is a light-driven water:plastoquinone oxidoreductase that uses light energy to abstract electrons from H(2)O, generating O(2) and a proton gradient subsequently used for ATP formation. It consists of a core antenna complex that captures photons, and an electron transfer chain that converts photonic excitation into a charge separation. The D1/D2 (PsbA/PsbD) reaction center heterodimer binds P680, the primary electron donor of PSII as well as several subsequent electron acceptors. The chain is Photosystem II protein D1 from Ceratophyllum demersum (Rigid hornwort).